The sequence spans 314 residues: Ribosomal RNA small subunit methyltransferase H (314 aa).

S-adenosyl-L-methionine contacts are provided by residues 37–39 (GSH), D57, F84, D105, and Q112.

Belongs to the methyltransferase superfamily. RsmH family.

It localises to the cytoplasm. It catalyses the reaction cytidine(1402) in 16S rRNA + S-adenosyl-L-methionine = N(4)-methylcytidine(1402) in 16S rRNA + S-adenosyl-L-homocysteine + H(+). Specifically methylates the N4 position of cytidine in position 1402 (C1402) of 16S rRNA. This chain is Ribosomal RNA small subunit methyltransferase H, found in Fusobacterium nucleatum subsp. nucleatum (strain ATCC 25586 / DSM 15643 / BCRC 10681 / CIP 101130 / JCM 8532 / KCTC 2640 / LMG 13131 / VPI 4355).